A 287-amino-acid chain; its full sequence is Probable endoribonuclease YicC (287 aa).

Belongs to the YicC/YloC family. Requires a divalent metal cation as cofactor.

Functionally, probably a ssRNA endonuclease. Its function is as follows. Might contribute to small RNA (sRNA) regulation. The protein is Probable endoribonuclease YicC of Haemophilus influenzae (strain ATCC 51907 / DSM 11121 / KW20 / Rd).